The primary structure comprises 936 residues: Isoleucine--tRNA ligase (936 aa).

The 'HIGH' region motif lies at 58 to 68 (PYANGRAHLGT). Glu-561 is a binding site for L-isoleucyl-5'-AMP. Positions 602 to 606 (KMSKS) match the 'KMSKS' region motif. Residue Lys-605 participates in ATP binding. 4 residues coordinate Zn(2+): Cys-899, Cys-902, Cys-919, and Cys-922.

Belongs to the class-I aminoacyl-tRNA synthetase family. IleS type 1 subfamily. In terms of assembly, monomer. The cofactor is Zn(2+).

The protein resides in the cytoplasm. The enzyme catalyses tRNA(Ile) + L-isoleucine + ATP = L-isoleucyl-tRNA(Ile) + AMP + diphosphate. Its function is as follows. Catalyzes the attachment of isoleucine to tRNA(Ile). As IleRS can inadvertently accommodate and process structurally similar amino acids such as valine, to avoid such errors it has two additional distinct tRNA(Ile)-dependent editing activities. One activity is designated as 'pretransfer' editing and involves the hydrolysis of activated Val-AMP. The other activity is designated 'posttransfer' editing and involves deacylation of mischarged Val-tRNA(Ile). This is Isoleucine--tRNA ligase from Coxiella burnetii (strain CbuK_Q154) (Coxiella burnetii (strain Q154)).